A 229-amino-acid polypeptide reads, in one-letter code: Small ribosomal subunit protein uS5 (229 aa).

In terms of domain architecture, S5 DRBM spans 61–124 (LEEQVLDVKL…AHAKLSLIKV (64 aa)).

It belongs to the universal ribosomal protein uS5 family. Part of the 30S ribosomal subunit. Contacts protein S4.

Its function is as follows. With S4 and S12 plays an important role in translational accuracy. In Methanococcus maripaludis (strain C7 / ATCC BAA-1331), this protein is Small ribosomal subunit protein uS5.